A 690-amino-acid polypeptide reads, in one-letter code: Elongation factor G (690 aa).

The 276-residue stretch at 8–283 folds into the tr-type G domain; that stretch reads EDYRNFGIMA…AVVDYLPSPV (276 aa). GTP contacts are provided by residues 17–24, 81–85, and 135–138; these read AHIDAGKT, DTPGH, and NKMD.

Belongs to the TRAFAC class translation factor GTPase superfamily. Classic translation factor GTPase family. EF-G/EF-2 subfamily.

The protein localises to the cytoplasm. In terms of biological role, catalyzes the GTP-dependent ribosomal translocation step during translation elongation. During this step, the ribosome changes from the pre-translocational (PRE) to the post-translocational (POST) state as the newly formed A-site-bound peptidyl-tRNA and P-site-bound deacylated tRNA move to the P and E sites, respectively. Catalyzes the coordinated movement of the two tRNA molecules, the mRNA and conformational changes in the ribosome. The protein is Elongation factor G of Rhodopseudomonas palustris (strain BisA53).